A 156-amino-acid chain; its full sequence is Cyanate hydratase (156 aa).

Active-site residues include Arg96, Glu99, and Ser122.

Belongs to the cyanase family.

The enzyme catalyses cyanate + hydrogencarbonate + 3 H(+) = NH4(+) + 2 CO2. Functionally, catalyzes the reaction of cyanate with bicarbonate to produce ammonia and carbon dioxide. This Pseudomonas aeruginosa (strain LESB58) protein is Cyanate hydratase.